A 98-amino-acid polypeptide reads, in one-letter code: Small ribosomal subunit protein bS6 (98 aa).

Belongs to the bacterial ribosomal protein bS6 family.

Functionally, binds together with bS18 to 16S ribosomal RNA. This chain is Small ribosomal subunit protein bS6, found in Staphylococcus haemolyticus (strain JCSC1435).